Here is a 292-residue protein sequence, read N- to C-terminus: Small ribosomal subunit protein uS2 (292 aa).

Positions 230–292 (RSGGAPGSEK…KKEAGSGEEA (63 aa)) are disordered. Basic and acidic residues-rich tracts occupy residues 247–259 (EWER…KTEA) and 271–292 (PAKE…GEEA).

It belongs to the universal ribosomal protein uS2 family.

The protein is Small ribosomal subunit protein uS2 of Thermobifida fusca (strain YX).